We begin with the raw amino-acid sequence, 190 residues long: Imidazoleglycerol-phosphate dehydratase (190 aa).

It belongs to the imidazoleglycerol-phosphate dehydratase family.

The protein resides in the cytoplasm. The catalysed reaction is D-erythro-1-(imidazol-4-yl)glycerol 3-phosphate = 3-(imidazol-4-yl)-2-oxopropyl phosphate + H2O. The protein operates within amino-acid biosynthesis; L-histidine biosynthesis; L-histidine from 5-phospho-alpha-D-ribose 1-diphosphate: step 6/9. This is Imidazoleglycerol-phosphate dehydratase from Methanococcus maripaludis (strain C5 / ATCC BAA-1333).